The sequence spans 525 residues: Cytochrome P450 4V2 (525 aa).

The chain crosses the membrane as a helical span at residues 13–33 (LLLWGAASAVSVAGATVLLNI). Heme contacts are provided by Glu329 and Cys467.

This sequence belongs to the cytochrome P450 family. The cofactor is heme.

It is found in the endoplasmic reticulum membrane. The enzyme catalyses dodecanoate + reduced [NADPH--hemoprotein reductase] + O2 = 12-hydroxydodecanoate + oxidized [NADPH--hemoprotein reductase] + H2O + H(+). It catalyses the reaction tetradecanoate + reduced [NADPH--hemoprotein reductase] + O2 = 14-hydroxytetradecanoate + oxidized [NADPH--hemoprotein reductase] + H2O + H(+). The catalysed reaction is hexadecanoate + reduced [NADPH--hemoprotein reductase] + O2 = 16-hydroxyhexadecanoate + oxidized [NADPH--hemoprotein reductase] + H2O + H(+). It carries out the reaction (5Z,8Z,11Z,14Z,17Z)-eicosapentaenoate + reduced [NADPH--hemoprotein reductase] + O2 = 20-hydroxy-(5Z,8Z,11Z,14Z,17Z)-eicosapentaenoate + oxidized [NADPH--hemoprotein reductase] + H2O + H(+). The enzyme catalyses (4Z,7Z,10Z,13Z,16Z,19Z)-docosahexaenoate + reduced [NADPH--hemoprotein reductase] + O2 = 22-hydroxy-(4Z,7Z,10Z,13Z,16Z,19Z)-docosahexaenoate + oxidized [NADPH--hemoprotein reductase] + H2O + H(+). The protein operates within lipid metabolism; fatty acid metabolism. Inhibited by N-hydroxy-N'-(4-n-butyl-2-methylphenyl formamidine)(HET0016) with an IC(50) of 38 nM. In terms of biological role, a cytochrome P450 monooxygenase involved in fatty acid metabolism in the eye. Catalyzes the omega-hydroxylation of polyunsaturated fatty acids (PUFAs) docosahexaenoate (DHA) and its precursor eicosapentaenoate (EPA), and may contribute to the homeostasis of these retinal PUFAs. Omega hydroxylates saturated fatty acids such as laurate, myristate and palmitate, the catalytic efficiency decreasing in the following order: myristate &gt; laurate &gt; palmitate (C14&gt;C12&gt;C16). Mechanistically, uses molecular oxygen inserting one oxygen atom into a substrate, and reducing the second into a water molecule, with two electrons provided by NADPH via cytochrome P450 reductase (CPR; NADPH-ferrihemoprotein reductase). In Rattus norvegicus (Rat), this protein is Cytochrome P450 4V2 (Cyp4v2).